The following is a 439-amino-acid chain: 23S rRNA (uracil(1939)-C(5))-methyltransferase RlmD (439 aa).

Residues 5–63 (RKLEHKTYKLNIESFSHEGRGIAHFEDKIIFVSDALPGELVIANRTFSCAKFEEADAKE) form the TRAM domain. [4Fe-4S] cluster-binding residues include Cys-76, Cys-82, Cys-85, and Cys-164. Gln-271, Phe-300, Asn-305, Glu-321, Asp-348, and Asp-370 together coordinate S-adenosyl-L-methionine. The active-site Nucleophile is Cys-396.

Belongs to the class I-like SAM-binding methyltransferase superfamily. RNA M5U methyltransferase family. RlmD subfamily.

It carries out the reaction uridine(1939) in 23S rRNA + S-adenosyl-L-methionine = 5-methyluridine(1939) in 23S rRNA + S-adenosyl-L-homocysteine + H(+). Functionally, catalyzes the formation of 5-methyl-uridine at position 1939 (m5U1939) in 23S rRNA. The protein is 23S rRNA (uracil(1939)-C(5))-methyltransferase RlmD of Vesicomyosocius okutanii subsp. Calyptogena okutanii (strain HA).